Reading from the N-terminus, the 208-residue chain is High frequency lysogenization protein HflD homolog (208 aa).

Residues 91–125 adopt a coiled-coil conformation; it reads LMVLERKLNANKQAMNQLGERLGQLERQLAHFDLE.

It belongs to the HflD family.

It is found in the cytoplasm. It localises to the cell inner membrane. The polypeptide is High frequency lysogenization protein HflD homolog (Serratia proteamaculans (strain 568)).